The primary structure comprises 394 residues: Formate-dependent phosphoribosylglycinamide formyltransferase (394 aa).

Residues 21–22 and E81 each bind N(1)-(5-phospho-beta-D-ribosyl)glycinamide; that span reads EL. Residues R113, K154, 159–164, 194–197, and E202 each bind ATP; these read SSGKGQ and EEFI. One can recognise an ATP-grasp domain in the interval 118–307; that stretch reads RLAAEELGLP…QFELHVRAIL (190 aa). E266 and E278 together coordinate Mg(2+). N(1)-(5-phospho-beta-D-ribosyl)glycinamide is bound by residues D285, K355, and 362–363; that span reads RR.

The protein belongs to the PurK/PurT family. As to quaternary structure, homodimer.

The catalysed reaction is N(1)-(5-phospho-beta-D-ribosyl)glycinamide + formate + ATP = N(2)-formyl-N(1)-(5-phospho-beta-D-ribosyl)glycinamide + ADP + phosphate + H(+). Its pathway is purine metabolism; IMP biosynthesis via de novo pathway; N(2)-formyl-N(1)-(5-phospho-D-ribosyl)glycinamide from N(1)-(5-phospho-D-ribosyl)glycinamide (formate route): step 1/1. Involved in the de novo purine biosynthesis. Catalyzes the transfer of formate to 5-phospho-ribosyl-glycinamide (GAR), producing 5-phospho-ribosyl-N-formylglycinamide (FGAR). Formate is provided by PurU via hydrolysis of 10-formyl-tetrahydrofolate. The polypeptide is Formate-dependent phosphoribosylglycinamide formyltransferase (Pelobacter propionicus (strain DSM 2379 / NBRC 103807 / OttBd1)).